Reading from the N-terminus, the 186-residue chain is MSGISGCPFFLWGLLALLGLALVISLIFNISHYVEKQRQDKMYSYSSDHTRVDEYYIEDTPIYGNLDDMISEPMDENCYEQMKARPEKSVNKMQEATPSAQATNETQMCYASLDHSVKGKRRKPRKQNTHFSDKDGDEQLHAIDASVSKTTLVDSFSPESQAVEENIHDDPIRLFGLIRAKREPIN.

Residues 1–7 (MSGISGC) lie on the Extracellular side of the membrane. The helical; Signal-anchor for type III membrane protein transmembrane segment at 8 to 28 (PFFLWGLLALLGLALVISLIF) threads the bilayer. At 29–186 (NISHYVEKQR…LIRAKREPIN (158 aa)) the chain is on the cytoplasmic side. At S46 the chain carries Phosphoserine. A Phosphotyrosine modification is found at Y79. The interaction with PIK3R1 stretch occupies residues 79 to 82 (YEQM). The interval 116-140 (SVKGKRRKPRKQNTHFSDKDGDEQL) is disordered. Over residues 118 to 128 (KGKRRKPRKQN) the composition is skewed to basic residues. A compositionally biased stretch (basic and acidic residues) spans 131-140 (FSDKDGDEQL).

As to quaternary structure, homodimer; disulfide-linked. Interacts with CD3Z. When phosphorylated, interacts with PIK3R1. Phosphorylated on tyrosines by LCK or FYN upon TCR activation. In terms of tissue distribution, strongly expressed in thymus, and to a lesser extent in spleen, lymph node and peripheral blood lymphocytes. Present in T-cells and NK cells, but not B-cells (at protein level).

It is found in the cell membrane. Its function is as follows. Stabilizes the TCR (T-cell antigen receptor)/CD3 complex at the surface of T-cells. The protein is T-cell receptor-associated transmembrane adapter 1 (TRAT1) of Homo sapiens (Human).